The primary structure comprises 211 residues: Large ribosomal subunit protein uL4 (211 aa).

Positions 40 to 87 (QQAHTRQGTASTLTRSEVRGGGRKPYKQKGTGRARQGSIRTPLRPGGG) are disordered. Polar residues predominate over residues 41–54 (QAHTRQGTASTLTR). Residues 60–71 (GGRKPYKQKGTG) are compositionally biased toward basic residues.

The protein belongs to the universal ribosomal protein uL4 family. As to quaternary structure, part of the 50S ribosomal subunit.

In terms of biological role, one of the primary rRNA binding proteins, this protein initially binds near the 5'-end of the 23S rRNA. It is important during the early stages of 50S assembly. It makes multiple contacts with different domains of the 23S rRNA in the assembled 50S subunit and ribosome. Its function is as follows. Forms part of the polypeptide exit tunnel. The polypeptide is Large ribosomal subunit protein uL4 (Synechococcus sp. (strain WH7803)).